Consider the following 530-residue polypeptide: UDP-glucuronosyltransferase 1A10 (530 aa).

The first 25 residues, 1-25 (MARAGWTSPVPLCVCLLLTCGFAEA), serve as a signal peptide directing secretion. 3 N-linked (GlcNAc...) asparagine glycosylation sites follow: N71, N292, and N344. The chain crosses the membrane as a helical span at residues 488–504 (VIGFLLAVVLTVAFITF).

It belongs to the UDP-glycosyltransferase family. In terms of assembly, homodimer. Homooligomer. Interacts with UGT1A1, UGT1A3, UGT1A4, UGT1A6, UGT1A7, UGT1A8 and UGT1A9 to form heterodimers. Isoform 1 interacts with isoform 2/i2 suggesting that oligomerization is involved in negative regulation of transferase activity by isoform 2. Isoform 1 also interacts with respective i2 isoforms of UGT1A1, UGT1A3, UGT1A4, UGT1A6, UGT1A7, UGT1A8 and UGT1A9. As to expression, liver and colon. Isoform 1 and isoform 2 are expressed in colon, esophagus and small intestine; isoform 2 but not isoform 1 is expressed in liver or kidney.

The protein resides in the endoplasmic reticulum membrane. The enzyme catalyses glucuronate acceptor + UDP-alpha-D-glucuronate = acceptor beta-D-glucuronoside + UDP + H(+). It carries out the reaction 17beta-estradiol + UDP-alpha-D-glucuronate = 17beta-estradiol 3-O-(beta-D-glucuronate) + UDP + H(+). The catalysed reaction is 17beta-estradiol + UDP-alpha-D-glucuronate = 17beta-estradiol 17-O-(beta-D-glucuronate) + UDP + H(+). It catalyses the reaction 17alpha-estradiol + UDP-alpha-D-glucuronate = 17alpha-estradiol 3-O-(beta-D-glucuronate) + UDP + H(+). The enzyme catalyses 16alpha,17beta-estriol + UDP-alpha-D-glucuronate = 16alpha,17beta-estriol 3-O-(beta-D-glucuronate) + UDP + H(+). It carries out the reaction 16beta,17beta-estriol + UDP-alpha-D-glucuronate = 16beta,17beta-estriol 3-O-(beta-D-glucuronate) + UDP + H(+). The catalysed reaction is 16alpha,17alpha-estriol + UDP-alpha-D-glucuronate = 16alpha,17alpha-estriol 3-O-(beta-D-glucuronate) + UDP + H(+). It catalyses the reaction 16alpha-hydroxyestrone + UDP-alpha-D-glucuronate = 16alpha-hydroxyestrone 3-O-(beta-D-glucuronate) + UDP + H(+). The enzyme catalyses estrone + UDP-alpha-D-glucuronate = estrone 3-O-(beta-D-glucuronate) + UDP + H(+). It carries out the reaction prunetin + UDP-alpha-D-glucuronate = prunetin-4'-O-beta-D-glucuronide + UDP. The catalysed reaction is (5Z,8Z,11Z,14Z)-eicosatetraenoate + UDP-alpha-D-glucuronate = O-[(5Z),(8Z),(11Z),(14Z)-eicosatetraenoyl]-beta-D-glucuronate + UDP. It catalyses the reaction 15-hydroxy-(5Z,8Z,11Z,13E)-eicosatetraenoate + UDP-alpha-D-glucuronate = 15-O-(beta-D-glucuronosyl)-(5Z,8Z,11Z,14Z)-eicosatetraenoate + UDP + H(+). The enzyme catalyses prostaglandin B1 + UDP-alpha-D-glucuronate = 15-O-(beta-D-glucuronosyl)-prostaglandin B1 + UDP + H(+). It carries out the reaction (E)-ferulate + UDP-alpha-D-glucuronate = (E)-4-O-(beta-D-glucuronosyl)-ferulate + UDP + H(+). The catalysed reaction is (E)-ferulate + UDP-alpha-D-glucuronate = (E)-ferulic acid beta-D-glucuronate ester + UDP. It catalyses the reaction losartan + UDP-alpha-D-glucuronate = losartan-2-N-beta-D-glucuronide + UDP. The enzyme catalyses candesartan + UDP-alpha-D-glucuronate = candesartan O-beta-D-glucuronoside + UDP. It carries out the reaction candesartan + UDP-alpha-D-glucuronate = candesartan-2-N-beta-D-glucuronide + UDP. The catalysed reaction is zolasartan + UDP-alpha-D-glucuronate = zolarsartan-1-N-beta-D-glucuronide + UDP. Its function is as follows. UDP-glucuronosyltransferase (UGT) that catalyzes phase II biotransformation reactions in which lipophilic substrates are conjugated with glucuronic acid to increase the metabolite's water solubility, thereby facilitating excretion into either the urine or bile. Essential for the elimination and detoxification of drugs, xenobiotics and endogenous compounds. Catalyzes the glucuronidation of endogenous estrogen hormones such as estradiol, estrone and estriol. Involved in the glucuronidation of arachidonic acid (AA) and AA-derived eicosanoids including 15-HETE and PGB1. Involved in the glucuronidation of the phytochemical ferulic acid at the phenolic or the carboxylic acid group. Also catalyzes the glucuronidation of the isoflavones genistein, daidzein, glycitein, formononetin, biochanin A and prunetin, which are phytoestrogens with anticancer and cardiovascular properties. Involved in the glucuronidation of the AGTR1 angiotensin receptor antagonist losartan, caderastan and zolarsatan, drugs which can inhibit the effect of angiotensin II. In terms of biological role, lacks UGT glucuronidation activity but acts as a negative regulator of isoform 1. The chain is UDP-glucuronosyltransferase 1A10 from Homo sapiens (Human).